A 401-amino-acid chain; its full sequence is Acetate kinase (401 aa).

N9 contributes to the Mg(2+) binding site. K16 contacts ATP. R88 contacts substrate. D147 functions as the Proton donor/acceptor in the catalytic mechanism. Residues 207–211 (HLGNG), 282–284 (DCR), and 333–337 (GIGEN) contribute to the ATP site. Position 388 (E388) interacts with Mg(2+).

This sequence belongs to the acetokinase family. In terms of assembly, homodimer. Mg(2+) is required as a cofactor. It depends on Mn(2+) as a cofactor.

It localises to the cytoplasm. The enzyme catalyses acetate + ATP = acetyl phosphate + ADP. The protein operates within metabolic intermediate biosynthesis; acetyl-CoA biosynthesis; acetyl-CoA from acetate: step 1/2. In terms of biological role, catalyzes the formation of acetyl phosphate from acetate and ATP. Can also catalyze the reverse reaction. This Haemophilus influenzae (strain PittGG) protein is Acetate kinase.